Here is a 517-residue protein sequence, read N- to C-terminus: Crotonobetaine/carnitine--CoA ligase (517 aa).

Belongs to the ATP-dependent AMP-binding enzyme family.

The enzyme catalyses 4-(trimethylamino)butanoate + ATP + CoA = 4-(trimethylamino)butanoyl-CoA + AMP + diphosphate. The catalysed reaction is crotonobetaine + ATP + CoA = crotonobetainyl-CoA + AMP + diphosphate. It carries out the reaction (R)-carnitine + ATP + CoA = (R)-carnitinyl-CoA + AMP + diphosphate. It participates in amine and polyamine metabolism; carnitine metabolism. Its function is as follows. Catalyzes the transfer of CoA to carnitine, generating the initial carnitinyl-CoA needed for the CaiB reaction cycle. Also has activity toward crotonobetaine and gamma-butyrobetaine. The sequence is that of Crotonobetaine/carnitine--CoA ligase from Escherichia coli O17:K52:H18 (strain UMN026 / ExPEC).